The primary structure comprises 139 residues: Angiogenin (139 aa).

Positions 1–21 (MAMSSLWWTAILLLALTVSMC) are cleaved as a signal peptide. His34 serves as the catalytic Proton acceptor. 3 disulfides stabilise this stretch: Cys49/Cys102, Cys64/Cys111, and Cys82/Cys126. The tRNA site is built by Cys102 and Val122. His133 functions as the Proton donor in the catalytic mechanism.

This sequence belongs to the pancreatic ribonuclease family. Homodimer. Interacts with RNH1; inhibiting ANG ribonuclease activity.

The protein resides in the secreted. It localises to the nucleus. Its subcellular location is the nucleolus. It is found in the cytoplasm. The protein localises to the stress granule. Functionally, secreted ribonuclease that can either promote or restrict cell proliferation of target cells, depending on the context. Endocytosed in target cells via its receptor PLXNB2 and translocates to the cytoplasm or nucleus. Under stress conditions, localizes to the cytoplasm and promotes the assembly of stress granules (SGs): specifically cleaves a subset of tRNAs within anticodon loops to produce tRNA-derived stress-induced fragments (tiRNAs), resulting in translation repression and inhibition of cell proliferation. tiRNas also prevent formation of apoptosome, thereby promoting cell survival. Preferentially cleaves RNAs between a pyrimidine and an adenosine residue, suggesting that it cleaves the anticodon loop of tRNA(Ala) (32-UUAGCAU-38) after positions 33 and 36. Cleaves a subset of tRNAs, including tRNA(Ala), tRNA(Glu), tRNA(Gly), tRNA(Lys), tRNA(Val), tRNA(His), tRNA(Asp) and tRNA(Sec). Under growth conditions and in differentiated cells, translocates to the nucleus and stimulates ribosomal RNA (rRNA) transcription, including that containing the initiation site sequences of 45S rRNA, thereby promoting cell growth and proliferation. Angiogenin induces vascularization of normal and malignant tissues via its ability to promote rRNA transcription. This is Angiogenin (ANG) from Gallus gallus (Chicken).